The sequence spans 351 residues: MLKTSEKIFSETPSIITKEEGLKILNGVIPLTTCLDKAFQERNRYFENKVRIHILDNIKNGYCPEDCGYCAQRKNANSGVQEYPMKSEQEIYEDAVQAKKNGAYRFCMVTSGTGPNRLTTEKLASTIQRITDELNMKVCLSAGLLDIEKAQVLKEAGLDRYNHNLNTSENHYSEICDTHTYLQRTQTLDSVSKAGIGMCSGVIVGMGESFQDIVDVAFQLKSFRVISIPVNFFIPVKGHTIKNPSVLTPELCVRILCMFRLINPDSEIRIAAGREGHLRSLSATALFAANSLFSSGYLNVKGSEILETVAMIRDAGFVPELSNGEILPENFGTESFYSEKNFPELYKFKKF.

The region spanning 48–265 (NKVRIHILDN…LCMFRLINPD (218 aa)) is the Radical SAM core domain. Residues Cys63, Cys67, and Cys70 each contribute to the [4Fe-4S] cluster site. Cys107, Cys139, Cys199, and Arg269 together coordinate [2Fe-2S] cluster.

It belongs to the radical SAM superfamily. Biotin synthase family. As to quaternary structure, homodimer. It depends on [4Fe-4S] cluster as a cofactor. Requires [2Fe-2S] cluster as cofactor.

The catalysed reaction is (4R,5S)-dethiobiotin + (sulfur carrier)-SH + 2 reduced [2Fe-2S]-[ferredoxin] + 2 S-adenosyl-L-methionine = (sulfur carrier)-H + biotin + 2 5'-deoxyadenosine + 2 L-methionine + 2 oxidized [2Fe-2S]-[ferredoxin]. It participates in cofactor biosynthesis; biotin biosynthesis; biotin from 7,8-diaminononanoate: step 2/2. In terms of biological role, catalyzes the conversion of dethiobiotin (DTB) to biotin by the insertion of a sulfur atom into dethiobiotin via a radical-based mechanism. This Leptospira interrogans serogroup Icterohaemorrhagiae serovar Lai (strain 56601) protein is Biotin synthase.